The primary structure comprises 123 residues: MAKIKARDLRGKKKEELLKQLDDLKVELSQLRVAKVTGGAASKLSKIRVVRKSIARVLTVINQTQKENLRKFYKGKKYKPLDLRPKKTRAIRRQLTKHEENLMTKKMQRKSRLYSIRKFAVKA.

Belongs to the universal ribosomal protein uL29 family. As to quaternary structure, component of the large ribosomal subunit.

The protein localises to the cytoplasm. Its function is as follows. Component of the large ribosomal subunit. The ribosome is a large ribonucleoprotein complex responsible for the synthesis of proteins in the cell. Plays an essential role in early embryonic development. May act as a haploinsufficient tumor suppressor. The protein is Large ribosomal subunit protein uL29 (rpl35) of Danio rerio (Zebrafish).